The sequence spans 401 residues: Anhydro-N-acetylmuramic acid kinase (401 aa).

25-32 is a binding site for ATP; that stretch reads GTSLDGLD.

This sequence belongs to the anhydro-N-acetylmuramic acid kinase family.

The catalysed reaction is 1,6-anhydro-N-acetyl-beta-muramate + ATP + H2O = N-acetyl-D-muramate 6-phosphate + ADP + H(+). The protein operates within amino-sugar metabolism; 1,6-anhydro-N-acetylmuramate degradation. It functions in the pathway cell wall biogenesis; peptidoglycan recycling. Functionally, catalyzes the specific phosphorylation of 1,6-anhydro-N-acetylmuramic acid (anhMurNAc) with the simultaneous cleavage of the 1,6-anhydro ring, generating MurNAc-6-P. Is required for the utilization of anhMurNAc either imported from the medium or derived from its own cell wall murein, and thus plays a role in cell wall recycling. In Pseudoalteromonas translucida (strain TAC 125), this protein is Anhydro-N-acetylmuramic acid kinase.